Here is a 343-residue protein sequence, read N- to C-terminus: General stress protein 30 (343 aa).

It belongs to the polysaccharide pyruvyl transferase family.

This Bacillus subtilis (strain 168) protein is General stress protein 30 (yxaB).